The primary structure comprises 847 residues: B-cell receptor CD22 (847 aa).

Positions 1 to 19 (MHLLGPWLLLLVLEYLAFS) are cleaved as a signal peptide. The region spanning 20 to 138 (DSSKWAFEHP…MERIHLNVSE (119 aa)) is the Ig-like V-type domain. Over 20–687 (DSSKWAFEHP…YYSPETIGRR (668 aa)) the chain is Extracellular. N67, N101, and N112 each carry an N-linked (GlcNAc...) asparagine glycan. R120 serves as a coordination point for N-acetylneuraminate. N-linked (GlcNAc...) asparagine glycosylation is found at N135, N164, and N231. 6 Ig-like C2-type domains span residues 143–235 (PHIQ…DTVQ), 242–326 (PKLE…VFLQ), 331–416 (PEPS…LDVQ), 419–500 (PKKV…VALN), 505–582 (PRDV…QTAS), and 593–676 (PRRL…STLT). Residues C161 and C219 are joined by a disulfide bond. Intrachain disulfides connect C265–C309 and C353–C396. N363, N428, N445, N448, and N479 each carry an N-linked (GlcNAc...) asparagine glycan. Intrachain disulfides connect C442–C484 and C529–C571. 2 N-linked (GlcNAc...) asparagine glycosylation sites follow: N574 and N634. C616 and C659 form a disulfide bridge. A helical membrane pass occupies residues 688–708 (VAVGFGSCLAILILAICGLKL). Residues 709 to 847 (QRRWKRTQSQ…ENVDYVILKH (139 aa)) are Cytoplasmic-facing. Phosphoserine is present on residues S725, S726, and S729. Short sequence motifs (ITIM motif) lie at residues 760-765 (ISYTTL) and 794-799 (VTYSVL). Y762 carries the phosphotyrosine modification. A phosphotyrosine mark is found at Y807, Y822, and Y842. 2 consecutive short sequence motifs (ITIM motif) follow at residues 820 to 825 (IHYSEL) and 840 to 845 (VDYVIL).

Belongs to the immunoglobulin superfamily. SIGLEC (sialic acid binding Ig-like lectin) family. Predominantly monomer of isoform CD22-beta. Also found as heterodimer of isoform CD22-beta and a shorter isoform. Interacts with PTPN6/SHP-1, LYN, SYK, PIK3R1/PIK3R2 and PLCG1 upon phosphorylation. Interacts with GRB2, INPP5D and SHC1 upon phosphorylation. May form a complex with INPP5D/SHIP, GRB2 and SHC1. In terms of processing, phosphorylation of Tyr-762, Tyr-807 and Tyr-822 are involved in binding to SYK, GRB2 and SYK, respectively. Phosphorylation of Tyr-842 is involved in binding to SYK, PLCG2 and PIK3R1/PIK3R2. Phosphorylated on tyrosine residues by LYN.

Its subcellular location is the cell membrane. Most highly expressed siglec (sialic acid-binding immunoglobulin-like lectin) on B-cells that plays a role in various aspects of B-cell biology including differentiation, antigen presentation, and trafficking to bone marrow. Binds to alpha 2,6-linked sialic acid residues of surface molecules such as CD22 itself, CD45 and IgM in a cis configuration. Can also bind to ligands on other cells as an adhesion molecule in a trans configuration. Acts as an inhibitory coreceptor on the surface of B-cells and inhibits B-cell receptor induced signaling, characterized by inhibition of the calcium mobilization and cellular activation. Mechanistically, the immunoreceptor tyrosine-based inhibitory motif domain is phosphorylated by the Src kinase LYN, which in turn leads to the recruitment of the protein tyrosine phosphatase 1/PTPN6, leading to the negative regulation of BCR signaling. If this negative signaling from is of sufficient strength, apoptosis of the B-cell can be induced. The polypeptide is B-cell receptor CD22 (Pan troglodytes (Chimpanzee)).